The chain runs to 289 residues: Thymidylate synthase (289 aa).

DUMP is bound by residues R26 and 151-152 (RR). C171 acts as the Nucleophile in catalysis. Residues 191 to 194 (RSGD), N202, and 232 to 234 (HVY) each bind dUMP. D194 is a (6R)-5,10-methylene-5,6,7,8-tetrahydrofolate binding site. A (6R)-5,10-methylene-5,6,7,8-tetrahydrofolate-binding site is contributed by A288.

Belongs to the thymidylate synthase family. Homodimer.

It catalyses the reaction dUMP + (6R)-5,10-methylene-5,6,7,8-tetrahydrofolate = 7,8-dihydrofolate + dTMP. The protein operates within pyrimidine metabolism; dTTP biosynthesis. In Equus caballus (Horse), this protein is Thymidylate synthase.